Here is a 1205-residue protein sequence, read N- to C-terminus: Centrosome and spindle pole associated protein 1 (1205 aa).

Coiled coils occupy residues 12–34 (QKAK…EMKG) and 87–108 (KLKE…TQAK). The tract at residues 16 to 37 (LAKDKAELESDPPYMEMKGKAS) is disordered. The span at 158 to 173 (STEKVRQVEKNIEPKS) shows a compositional bias: basic and acidic residues. Disordered stretches follow at residues 158 to 187 (STEK…KSDL), 222 to 277 (SRRP…PGVS), and 380 to 467 (QQKK…GSTL). Polar residues predominate over residues 176 to 187 (NKNPISQGKSDL). Basic and acidic residues-rich tracts occupy residues 222–233 (SRRPLKQTKEEV) and 257–275 (ANGE…RDPG). The stretch at 357–391 (EDRELTKRRKEKYRQELLEQIAEQQKKKRREKDLA) forms a coiled coil. Basic and acidic residues-rich tracts occupy residues 401-410 (DPEKSPDRLK) and 417-428 (RHFEEMPPERPR). Phosphoserine is present on S405. A compositionally biased stretch (pro residues) spans 433–447 (TPPPPFSAPSSPSVP). Positions 574-618 (STQSLQSYQEALQEQIREREARRKKERLEKEEYEAKLEAEMRIYN) form a coiled coil. A disordered region spans residues 677 to 704 (AENLEDSANKNSGPLQTQSSPFARGNTF). The span at 685 to 697 (NKNSGPLQTQSSP) shows a compositional bias: polar residues. A coiled-coil region spans residues 724–813 (RFQIEEKRQR…EKHNLQLQHY (90 aa)). A phosphoserine mark is found at S850 and S869. The disordered stretch occupies residues 862 to 881 (SSMSRAQSPPVPARKNQLRA). Positions 874–911 (ARKNQLRAEEEKKNVIMELSEMRKQLRSEERRLQGRLL) form a coiled coil. Position 915 is a phosphoserine (S915). Residues 993 to 1014 (QQQALLREQQKRLNRIKMRRDA) adopt a coiled-coil conformation. Disordered stretches follow at residues 1086–1105 (GLDF…SLKS), 1124–1169 (RLTE…RPGT), and 1182–1205 (NEEQ…AAHA). Over residues 1124–1134 (RLTEQQKKPTN) the composition is skewed to basic and acidic residues. Acidic residues predominate over residues 1135-1145 (TDDEGSLVDPD). Over residues 1146–1156 (DIMRHLSDDGR) the composition is skewed to basic and acidic residues.

Interacts with PLEKHG6. Interacts with ARMC9, TOGARAM1, CCDC66, CEP104 and CEP290. In terms of processing, phosphorylated. Phosphorylation increases in colcemide-treated cells.

The protein resides in the cytoplasm. The protein localises to the cytoskeleton. It is found in the microtubule organizing center. It localises to the centrosome. Its subcellular location is the spindle. The protein resides in the spindle pole. The protein localises to the cell projection. It is found in the cilium. Its function is as follows. May play a role in cell-cycle-dependent microtubule organization. The sequence is that of Centrosome and spindle pole associated protein 1 (Cspp1) from Mus musculus (Mouse).